The following is an 891-amino-acid chain: Alanine--tRNA ligase (891 aa).

Residues histidine 564, histidine 568, cysteine 681, and histidine 685 each contribute to the Zn(2+) site.

The protein belongs to the class-II aminoacyl-tRNA synthetase family. It depends on Zn(2+) as a cofactor.

Its subcellular location is the cytoplasm. It carries out the reaction tRNA(Ala) + L-alanine + ATP = L-alanyl-tRNA(Ala) + AMP + diphosphate. Functionally, catalyzes the attachment of alanine to tRNA(Ala) in a two-step reaction: alanine is first activated by ATP to form Ala-AMP and then transferred to the acceptor end of tRNA(Ala). Also edits incorrectly charged Ser-tRNA(Ala) and Gly-tRNA(Ala) via its editing domain. The sequence is that of Alanine--tRNA ligase from Methylorubrum extorquens (strain PA1) (Methylobacterium extorquens).